The following is a 259-amino-acid chain: Phosphate import ATP-binding protein PstB 1 (259 aa).

One can recognise an ABC transporter domain in the interval 13-254 (IQVRGLEFFY…PSKTQTEDYI (242 aa)). 45–52 (GPSGCGKS) is an ATP binding site.

This sequence belongs to the ABC transporter superfamily. Phosphate importer (TC 3.A.1.7) family. In terms of assembly, the complex is composed of two ATP-binding proteins (PstB), two transmembrane proteins (PstC and PstA) and a solute-binding protein (PstS).

It localises to the cell inner membrane. It catalyses the reaction phosphate(out) + ATP + H2O = ADP + 2 phosphate(in) + H(+). Its function is as follows. Part of the ABC transporter complex PstSACB involved in phosphate import. Responsible for energy coupling to the transport system. The chain is Phosphate import ATP-binding protein PstB 1 from Pseudomonas syringae pv. tomato (strain ATCC BAA-871 / DC3000).